A 243-amino-acid chain; its full sequence is MGNKINPTGFRLGITQEHRSKWFATSKTYPTLLQEDDKIRTFIQKKYSSAGISDVLIARKADQLELELKTARPGVIVGRQGSGIEELRSGIQKTIGDRTRQVRINVVEVERVDADAYLLAEYIAQQLEKRVAFRRTIRMALQRAQRAGVLGLKVQVGGRLNGAEIARTEWTREGRVPLHTLRAEVDYALREANTTYGVLGIKVWVFKGEVLPKEEQTIPVGAIPRRKGSRKPQQFEDRSNENS.

The 72-residue stretch at 39-110 folds into the KH type-2 domain; the sequence is IRTFIQKKYS…QVRINVVEVE (72 aa). The segment at 221–243 is disordered; the sequence is GAIPRRKGSRKPQQFEDRSNENS. Residues 233 to 243 show a composition bias toward basic and acidic residues; sequence QQFEDRSNENS.

Belongs to the universal ribosomal protein uS3 family. In terms of assembly, part of the 30S ribosomal subunit. Forms a tight complex with proteins S10 and S14.

Binds the lower part of the 30S subunit head. Binds mRNA in the 70S ribosome, positioning it for translation. This Prochlorococcus marinus subsp. pastoris (strain CCMP1986 / NIES-2087 / MED4) protein is Small ribosomal subunit protein uS3.